Consider the following 892-residue polypeptide: Translation initiation factor IF-2 (892 aa).

A compositionally biased stretch (basic and acidic residues) spans 138–185 (QRNLAEQQRLAEVDRQRVEEQERKRREEEQAELERQKTESRVVEEILV). Disordered stretches follow at residues 138–250 (QRNL…EDDS) and 262–298 (AAER…SGAH). Residues 207 to 219 (LPRTVRPTPAARP) are compositionally biased toward low complexity. In terms of domain architecture, tr-type G spans 391–560 (PRPPVVTIMG…SIQAEVLELK (170 aa)). Residues 400–407 (GHVDHGKT), 446–450 (DTPGH), and 500–503 (SKID) contribute to the GTP site.

It belongs to the TRAFAC class translation factor GTPase superfamily. Classic translation factor GTPase family. IF-2 subfamily.

The protein resides in the cytoplasm. Functionally, one of the essential components for the initiation of protein synthesis. Protects formylmethionyl-tRNA from spontaneous hydrolysis and promotes its binding to the 30S ribosomal subunits. Also involved in the hydrolysis of GTP during the formation of the 70S ribosomal complex. This chain is Translation initiation factor IF-2, found in Xylella fastidiosa (strain Temecula1 / ATCC 700964).